The sequence spans 99 residues: Putative septation protein SpoVG (99 aa).

Belongs to the SpoVG family.

Its function is as follows. Could be involved in septation. This Myxococcus xanthus (strain DK1622) protein is Putative septation protein SpoVG.